A 663-amino-acid chain; its full sequence is Leishmanolysin-like peptidase (663 aa).

H246 provides a ligand contact to Zn(2+). E247 is an active-site residue. Zn(2+) contacts are provided by H250 and H353.

This sequence belongs to the peptidase M8 family. Zn(2+) is required as a cofactor.

The protein localises to the cytoplasm. In terms of biological role, essential for the coordination of mitotic progression, and also plays a role in cell migration. The chain is Leishmanolysin-like peptidase from Caenorhabditis elegans.